Consider the following 272-residue polypeptide: Undecaprenyl-diphosphatase (272 aa).

8 consecutive transmembrane segments (helical) span residues 5–25, 45–65, 88–108, 114–134, 153–172, 189–209, 221–241, and 251–271; these read YSLF…FLPV, AKTF…VVFW, HLTL…GLAF, ALFD…LLLA, YRQA…PGFS, YAAS…ASGL, GDLP…LIAI, and ISFV…YWVF.

It belongs to the UppP family.

Its subcellular location is the cell inner membrane. The enzyme catalyses di-trans,octa-cis-undecaprenyl diphosphate + H2O = di-trans,octa-cis-undecaprenyl phosphate + phosphate + H(+). Catalyzes the dephosphorylation of undecaprenyl diphosphate (UPP). Confers resistance to bacitracin. The chain is Undecaprenyl-diphosphatase from Yersinia pseudotuberculosis serotype IB (strain PB1/+).